The primary structure comprises 545 residues: CTP synthase (545 aa).

An amidoligase domain region spans residues 1–266 (MTTRYIFVTG…DDLVVKRFGL (266 aa)). Position 14 (serine 14) interacts with CTP. Serine 14 provides a ligand contact to UTP. ATP is bound by residues 15–20 (SLGKGI) and aspartate 72. Positions 72 and 140 each coordinate Mg(2+). CTP-binding positions include 147 to 149 (DIE), 187 to 192 (KTKPTQ), and lysine 223. UTP-binding positions include 187–192 (KTKPTQ) and lysine 223. 239–241 (KDV) provides a ligand contact to ATP. In terms of domain architecture, Glutamine amidotransferase type-1 spans 291 to 542 (VIGMVGKYIE…IAAASAHQKR (252 aa)). Glycine 352 contributes to the L-glutamine binding site. Residue cysteine 379 is the Nucleophile; for glutamine hydrolysis of the active site. Residues 380–383 (LGMQ), glutamate 403, and arginine 470 each bind L-glutamine. Catalysis depends on residues histidine 515 and glutamate 517.

This sequence belongs to the CTP synthase family. As to quaternary structure, homotetramer.

The enzyme catalyses UTP + L-glutamine + ATP + H2O = CTP + L-glutamate + ADP + phosphate + 2 H(+). The catalysed reaction is L-glutamine + H2O = L-glutamate + NH4(+). It carries out the reaction UTP + NH4(+) + ATP = CTP + ADP + phosphate + 2 H(+). Its pathway is pyrimidine metabolism; CTP biosynthesis via de novo pathway; CTP from UDP: step 2/2. Its activity is regulated as follows. Allosterically activated by GTP, when glutamine is the substrate; GTP has no effect on the reaction when ammonia is the substrate. The allosteric effector GTP functions by stabilizing the protein conformation that binds the tetrahedral intermediate(s) formed during glutamine hydrolysis. Inhibited by the product CTP, via allosteric rather than competitive inhibition. Its function is as follows. Catalyzes the ATP-dependent amination of UTP to CTP with either L-glutamine or ammonia as the source of nitrogen. Regulates intracellular CTP levels through interactions with the four ribonucleotide triphosphates. The sequence is that of CTP synthase from Shewanella putrefaciens (strain CN-32 / ATCC BAA-453).